The chain runs to 475 residues: Cytosolic non-specific dipeptidase (475 aa).

The residue at position 9 (Lys9) is an N6-acetyllysine. Ser58 bears the Phosphoserine mark. His99 lines the Mn(2+) pocket. Residue Asp101 is part of the active site. A Mn(2+)-binding site is contributed by Asp132. Glu166 acts as the Proton acceptor in catalysis. Substrate contacts are provided by residues 166–167 (EE), Asp195, His228, Thr330, Arg343, Ser417, and His445. Residues Glu167 and Asp195 each coordinate Mn(2+). His445 is a binding site for Mn(2+).

This sequence belongs to the peptidase M20A family. Homodimer. Requires Mn(2+) as cofactor.

The protein resides in the cytoplasm. The enzyme catalyses Hydrolysis of dipeptides, preferentially hydrophobic dipeptides including prolyl amino acids.. It catalyses the reaction L-threonyl-L-threonine + H2O = 2 L-threonine. The catalysed reaction is L-threonyl-L-serine + H2O = L-threonine + L-serine. It carries out the reaction L-seryl-L-threonine + H2O = L-threonine + L-serine. The enzyme catalyses L-cysteinylglycine + H2O = L-cysteine + glycine. It catalyses the reaction L-alanyl-L-cysteine + H2O = L-cysteine + L-alanine. The catalysed reaction is (S)-lactate + L-phenylalanine = N-[(S)-lactoyl]-L-phenylalanine + H2O. Its function is as follows. Catalyzes the peptide bond hydrolysis in dipeptides, displaying a non-redundant activity toward threonyl dipeptides. Mediates threonyl dipeptide catabolism in a tissue-specific way. Has high dipeptidase activity toward cysteinylglycine, an intermediate metabolite in glutathione metabolism. Metabolizes N-lactoyl-amino acids, both through hydrolysis to form lactic acid and amino acids, as well as through their formation by reverse proteolysis. Plays a role in the regulation of cell cycle arrest and apoptosis. This Bos taurus (Bovine) protein is Cytosolic non-specific dipeptidase (CNDP2).